The chain runs to 426 residues: MADSFELIVTRKEPVLVSPASETPKGLHYLSNLDQNIAIIVKTFYYFKSNSRSNEESYEVIKKSLSEVLVHYYPAAGRLTISPEGKIAVDCTGEGVVVVEAEANCGIEKIKKAISEIDQPETLEKLVYDVPGARNILEIPPVVVQVTNFKCGGFVLGLGMNHNMFDGIAAMEFLNSWAETARGLPLSVPPFLDRTLLRPRTPPKIEFPHNEFEDLEDISGTGKLYSDEKLVYKSFLFGPEKLERLKIMAETRSTTFQTLTGFLWRARCQALGLKPDQRIKLLFAADGRSRFVPELPKGYSGNGIVFTYCVTTAGEVTLNPLSHSVCLVKRAVEMVNDGFMRSAIDYFEVTRARPSLTATLLITSWAKLSFHTKDFGWGEPVVSGPVGLPEKEVILFLPCGSDTKSINVLLGLPGSAMKVFQGIMDI.

Residues His-162 and Asp-374 each act as proton acceptor in the active site.

Belongs to the plant acyltransferase family. In terms of tissue distribution, expressed in the outermost circumference of mature roots, the endodermis of young roots and in the seed coat of developing seeds. Expressed in outer integument layer 1 of the seed coat.

Functionally, involved in the synthesis of alkyl hydroxycinnamates in root waxes. Functions as a fatty alcohol:hydroxy cinnamoyl-CoA acyltransferase with apparent preference for caffeoyl-CoA. The sequence is that of Fatty alcohol:caffeoyl-CoA acyltransferase from Arabidopsis thaliana (Mouse-ear cress).